A 615-amino-acid chain; its full sequence is 1-deoxy-D-xylulose-5-phosphate synthase (615 aa).

Thiamine diphosphate is bound by residues His72 and 111–113 (GHS). Asp142 contributes to the Mg(2+) binding site. Thiamine diphosphate is bound by residues 143–144 (GA), Asn171, Tyr278, and Glu360. Residue Asn171 participates in Mg(2+) binding.

This sequence belongs to the transketolase family. DXPS subfamily. Homodimer. Mg(2+) serves as cofactor. Thiamine diphosphate is required as a cofactor.

The catalysed reaction is D-glyceraldehyde 3-phosphate + pyruvate + H(+) = 1-deoxy-D-xylulose 5-phosphate + CO2. The protein operates within metabolic intermediate biosynthesis; 1-deoxy-D-xylulose 5-phosphate biosynthesis; 1-deoxy-D-xylulose 5-phosphate from D-glyceraldehyde 3-phosphate and pyruvate: step 1/1. Catalyzes the acyloin condensation reaction between C atoms 2 and 3 of pyruvate and glyceraldehyde 3-phosphate to yield 1-deoxy-D-xylulose-5-phosphate (DXP). The polypeptide is 1-deoxy-D-xylulose-5-phosphate synthase (Campylobacter jejuni (strain RM1221)).